Here is a 499-residue protein sequence, read N- to C-terminus: Laccase (499 aa).

Plastocyanin-like domains lie at 2–127 and 139–281; these read VGPV…FVVY and VDND…ILRY. 2 N-linked (GlcNAc...) asparagine glycosylation sites follow: N51 and N54. H64, H66, H109, and H111 together coordinate Cu cation. 2 disulfide bridges follow: C85/C488 and C117/C205. Residue Y196 is modified to 3'-nitrotyrosine. Residues N208, N217, N292, and N333 are each glycosylated (N-linked (GlcNAc...) asparagine). The region spanning 348–470 is the Plastocyanin-like 3 domain; the sequence is SVPVLLQILS…GGFAVVQAED (123 aa). Y372 carries the 3'-nitrotyrosine modification. An N-linked (GlcNAc...) asparagine glycan is attached at N377. Cu cation is bound by residues H395, H398, and H400. N-linked (GlcNAc...) asparagine glycosylation is found at N416 and N436. H452, C453, H454, and H458 together coordinate Cu cation.

The protein belongs to the multicopper oxidase family. Requires Cu cation as cofactor.

Its subcellular location is the secreted. It catalyses the reaction 4 hydroquinone + O2 = 4 benzosemiquinone + 2 H2O. Its function is as follows. Lignin degradation and detoxification of lignin-derived products. The polypeptide is Laccase (Trametes maxima (White-rot fungus)).